Consider the following 453-residue polypeptide: Nuclear distribution protein PAC1-2 (453 aa).

The LisH domain maps to 9–41; that stretch reads QADELHKSIVAYLTANNLSTTAATLREELSLGE. Residues 63-87 adopt a coiled-coil conformation; the sequence is VVRLQKKVMDLESRSVALQSELEHS. A disordered region spans residues 84–108; sequence LEHSTPASLSKRKDPTSWLPRSPPR. WD repeat units lie at residues 113-154, 156-196, 200-243, 246-285, 290-350, 352-391, and 396-448; these read SHQA…RTLK, HTRA…KNTR, GHDH…CIKT, GHTG…PESK, GHEN…IKTL, GHDN…RCVK, and AHGQ…DKVV.

The protein belongs to the WD repeat LIS1/nudF family. In terms of assembly, self-associates. Interacts with NDL1 and dynein.

It is found in the cytoplasm. The protein resides in the cytoskeleton. It localises to the spindle pole. Its function is as follows. Positively regulates the activity of the minus-end directed microtubule motor protein dynein. May enhance dynein-mediated microtubule sliding by targeting dynein to the microtubule plus end. Required for nuclear migration during vegetative growth as well as development. Required for retrograde early endosome (EE) transport from the hyphal tip. Required for localization of dynein to the mitotic spindle poles. Recruits additional proteins to the dynein complex at SPBs. The polypeptide is Nuclear distribution protein PAC1-2 (Chaetomium globosum (strain ATCC 6205 / CBS 148.51 / DSM 1962 / NBRC 6347 / NRRL 1970) (Soil fungus)).